Reading from the N-terminus, the 93-residue chain is U11-ctenitoxin-Pn1a (93 aa).

Positions 1–21 (MKCAVLFLSVIALVHIFVVEA) are cleaved as a signal peptide. Residues 22–34 (EEEPDSDALVPQE) constitute a propeptide that is removed on maturation. 5 disulfide bridges follow: C37–C51, C44–C57, C50–C75, C59–C73, and C83–C90.

The protein belongs to the neurotoxin 09 (Tx3-6) family. As to expression, expressed by the venom gland.

It is found in the secreted. Probable neurotoxin. The polypeptide is U11-ctenitoxin-Pn1a (Phoneutria nigriventer (Brazilian armed spider)).